We begin with the raw amino-acid sequence, 354 residues long: Uroporphyrinogen decarboxylase (354 aa).

Substrate is bound by residues 27–31, Asp-77, Tyr-154, Ser-209, and His-327; that span reads RQAGR.

It belongs to the uroporphyrinogen decarboxylase family. Homodimer.

The protein resides in the cytoplasm. The enzyme catalyses uroporphyrinogen III + 4 H(+) = coproporphyrinogen III + 4 CO2. It functions in the pathway porphyrin-containing compound metabolism; protoporphyrin-IX biosynthesis; coproporphyrinogen-III from 5-aminolevulinate: step 4/4. Functionally, catalyzes the decarboxylation of four acetate groups of uroporphyrinogen-III to yield coproporphyrinogen-III. In Shewanella halifaxensis (strain HAW-EB4), this protein is Uroporphyrinogen decarboxylase.